We begin with the raw amino-acid sequence, 279 residues long: Movement protein (279 aa).

Positions 246 to 279 are disordered; that stretch reads SESEELNVESPPAAIGSSSASRSEAFRPQVVNGL. The segment covering 254–268 has biased composition (low complexity); that stretch reads ESPPAAIGSSSASRS.

The protein belongs to the cucumovirus movement protein family.

It is found in the host cell junction. The protein resides in the host plasmodesma. Its function is as follows. Transports viral genome to neighboring plant cells directly through plasmosdesmata, without any budding. The movement protein allows efficient cell to cell propagation, by bypassing the host cell wall barrier. Acts by forming a tubular structure at the host plasmodesmata, enlarging it enough to allow free passage of virion capsids. The protein is Movement protein of Cucumber mosaic virus (strain N) (CMV).